The primary structure comprises 359 residues: Fe-S cluster assembly protein DRE2 (359 aa).

The tract at residues Met1–Val148 is N-terminal SAM-like domain. 2 disordered regions span residues Asn97–Asp116 and Pro149–Val210. The linker stretch occupies residues Pro149–Met246. Over residues Leu152 to Pro164 the composition is skewed to basic residues. The span at Asn167 to Asn183 shows a compositional bias: polar residues. The span at Ala184 to Thr200 shows a compositional bias: low complexity. Residues Cys256, Cys267, Cys270, and Cys272 each contribute to the [2Fe-2S] cluster site. The tract at residues Cys256–Cys272 is fe-S binding site A. The [4Fe-4S] cluster site is built by Cys322, Cys325, Cys333, and Cys336. 2 short sequence motifs (cx2C motif) span residues Cys322–Cys325 and Cys333–Cys336. The tract at residues Cys322 to Cys336 is fe-S binding site B.

This sequence belongs to the anamorsin family. In terms of assembly, monomer. Interacts with TAH18. Interacts with MIA40. It depends on [2Fe-2S] cluster as a cofactor. Requires [4Fe-4S] cluster as cofactor.

Its subcellular location is the cytoplasm. It localises to the mitochondrion intermembrane space. In terms of biological role, component of the cytosolic iron-sulfur (Fe-S) protein assembly (CIA) machinery required for the maturation of extramitochondrial Fe-S proteins. Part of an electron transfer chain functioning in an early step of cytosolic Fe-S biogenesis, facilitating the de novo assembly of a [4Fe-4S] cluster on the scaffold complex CFD1-NBP35. Electrons are transferred to DRE2 from NADPH via the FAD- and FMN-containing protein TAH18. TAH18-DRE2 are also required for the assembly of the diferric tyrosyl radical cofactor of ribonucleotide reductase (RNR), probably by providing electrons for reduction during radical cofactor maturation in the catalytic small subunit RNR2. The chain is Fe-S cluster assembly protein DRE2 from Blastomyces gilchristii (strain SLH14081) (Blastomyces dermatitidis).